A 155-amino-acid polypeptide reads, in one-letter code: Phospholipase A2 A2-actitoxin-Ucs2a (155 aa).

The N-terminal stretch at 1–19 (MKNNIILVILLGISVFVDC) is a signal peptide. Residues 20-42 (LPLNDQEEDKSLNAQESEVSAVQ) constitute a propeptide that is removed on maturation. Cystine bridges form between cysteine 55–cysteine 118, cysteine 71–cysteine 87, cysteine 86–cysteine 143, cysteine 93–cysteine 136, cysteine 100–cysteine 129, and cysteine 122–cysteine 134. The Ca(2+) site is built by glycine 72 and glycine 74. Histidine 90 is an active-site residue. Aspartate 91 lines the Ca(2+) pocket. Residue aspartate 137 is part of the active site.

This sequence belongs to the phospholipase A2 family. It depends on Ca(2+) as a cofactor.

The protein localises to the secreted. It localises to the nematocyst. It carries out the reaction a 1,2-diacyl-sn-glycero-3-phosphocholine + H2O = a 1-acyl-sn-glycero-3-phosphocholine + a fatty acid + H(+). Its function is as follows. PLA2 catalyzes the calcium-dependent hydrolysis of the 2-acyl groups in 3-sn-phosphoglycerides. The polypeptide is Phospholipase A2 A2-actitoxin-Ucs2a (Urticina crassicornis (Mottled anemone)).